We begin with the raw amino-acid sequence, 436 residues long: 3-ketoacyl-CoA thiolase (436 aa).

Catalysis depends on Cys-99, which acts as the Acyl-thioester intermediate. Active-site proton acceptor residues include His-392 and Cys-422.

Belongs to the thiolase-like superfamily. Thiolase family. As to quaternary structure, heterotetramer of two alpha chains (FadJ) and two beta chains (FadI).

It is found in the cytoplasm. It catalyses the reaction an acyl-CoA + acetyl-CoA = a 3-oxoacyl-CoA + CoA. The protein operates within lipid metabolism; fatty acid beta-oxidation. In terms of biological role, catalyzes the final step of fatty acid oxidation in which acetyl-CoA is released and the CoA ester of a fatty acid two carbons shorter is formed. The polypeptide is 3-ketoacyl-CoA thiolase (Salmonella choleraesuis (strain SC-B67)).